Consider the following 88-residue polypeptide: Mitochondrial import inner membrane translocase subunit Tim10 (88 aa).

Residues 29–54 (CHRKCVPPHYKEAELSKGEAVCLDRC) carry the Twin CX3C motif motif. Intrachain disulfides connect Cys-29-Cys-54 and Cys-33-Cys-50.

It belongs to the small Tim family. Heterohexamer; composed of 3 copies of TIMM9 and 3 copies of TIMM10/TIM10A, named soluble 70 kDa complex. The complex forms a 6-bladed alpha-propeller structure and associates with the TIMM22 component of the TIM22 complex. Interacts with multi-pass transmembrane proteins in transit.

The protein resides in the mitochondrion inner membrane. Mitochondrial intermembrane chaperone that participates in the import and insertion of multi-pass transmembrane proteins into the mitochondrial inner membrane. May also be required for the transfer of beta-barrel precursors from the TOM complex to the sorting and assembly machinery (SAM complex) of the outer membrane. Acts as a chaperone-like protein that protects the hydrophobic precursors from aggregation and guide them through the mitochondrial intermembrane space. This chain is Mitochondrial import inner membrane translocase subunit Tim10 (timm10), found in Danio rerio (Zebrafish).